Consider the following 355-residue polypeptide: Vacuolar protein sorting-associated protein 37C (355 aa).

Serine 29 is subject to Phosphoserine. The VPS37 C-terminal domain maps to 78-167 (VERCQEQKAK…RKPRASQELA (90 aa)). Residues 159–355 (KPRASQELAG…PPPGPAWPGY (197 aa)) form a disordered region. Pro residues-rich tracts occupy residues 170-186 (APPPRPPPPVRPVPQGT) and 194-205 (PQPPSAMPPYPL). The span at 246 to 257 (PAAQPGPRGAAG) shows a compositional bias: low complexity. Positions 321-355 (PGQPQPSVPLQPPYPPGPAPPYGFPPPPGPAWPGY) are enriched in pro residues.

This sequence belongs to the VPS37 family. As to quaternary structure, component of the ESCRT-I complex (endosomal sorting complex required for transport I) which consists of TSG101, VPS28, a VPS37 protein (VPS37A to -D) and MVB12A or MVB12B in a 1:1:1:1 stoichiometry. Interacts with TSG101, VPS28, MVB12A and MVB12B. Component of the ESCRT-I complex (endosomal sorting complex required for transport I) which consists of TSG101, VPS28, a VPS37 protein (VPS37A to -D) and UBAP1 in a 1:1:1:1 stoichiometry. Interacts with HGS and STAM2. Interacts with CEP55. Post-translationally, phosphorylated by TBK1.

Its subcellular location is the late endosome membrane. Its function is as follows. Component of the ESCRT-I complex, a regulator of vesicular trafficking process. Required for the sorting of endocytic ubiquitinated cargos into multivesicular bodies. May be involved in cell growth and differentiation. This Pongo abelii (Sumatran orangutan) protein is Vacuolar protein sorting-associated protein 37C (VPS37C).